The following is a 257-amino-acid chain: Na(+)-translocating NADH-quinone reductase subunit C (257 aa).

A helical membrane pass occupies residues 12 to 32 (LFVVIALSLVCSIIVSAAAVG). Threonine 225 carries the FMN phosphoryl threonine modification.

It belongs to the NqrC family. Composed of six subunits; NqrA, NqrB, NqrC, NqrD, NqrE and NqrF. FMN is required as a cofactor.

Its subcellular location is the cell inner membrane. The catalysed reaction is a ubiquinone + n Na(+)(in) + NADH + H(+) = a ubiquinol + n Na(+)(out) + NAD(+). Its function is as follows. NQR complex catalyzes the reduction of ubiquinone-1 to ubiquinol by two successive reactions, coupled with the transport of Na(+) ions from the cytoplasm to the periplasm. NqrA to NqrE are probably involved in the second step, the conversion of ubisemiquinone to ubiquinol. The chain is Na(+)-translocating NADH-quinone reductase subunit C from Vibrio cholerae serotype O1 (strain ATCC 39541 / Classical Ogawa 395 / O395).